The sequence spans 115 residues: NADH-ubiquinone oxidoreductase chain 3 (115 aa).

Transmembrane regions (helical) follow at residues 3 to 23 (FVLILMTNTLLALLLMIITFW), 55 to 75 (FFLVAITFLLFDLEIALLLPL), and 84 to 104 (LPLMVMSSLLLITILALSLAY).

It belongs to the complex I subunit 3 family. Core subunit of respiratory chain NADH dehydrogenase (Complex I) which is composed of 45 different subunits. Interacts with TMEM186. Interacts with TMEM242.

The protein resides in the mitochondrion inner membrane. The enzyme catalyses a ubiquinone + NADH + 5 H(+)(in) = a ubiquinol + NAD(+) + 4 H(+)(out). Core subunit of the mitochondrial membrane respiratory chain NADH dehydrogenase (Complex I) which catalyzes electron transfer from NADH through the respiratory chain, using ubiquinone as an electron acceptor. Essential for the catalytic activity of complex I. The chain is NADH-ubiquinone oxidoreductase chain 3 from Pan paniscus (Pygmy chimpanzee).